A 258-amino-acid polypeptide reads, in one-letter code: Thiazole synthase 2 (258 aa).

Lys-97 serves as the catalytic Schiff-base intermediate with DXP. 1-deoxy-D-xylulose 5-phosphate is bound by residues Gly-158, 184 to 185 (AG), and 206 to 207 (NT).

The protein belongs to the ThiG family. In terms of assembly, homotetramer. Forms heterodimers with either ThiH or ThiS.

The protein localises to the cytoplasm. The enzyme catalyses [ThiS sulfur-carrier protein]-C-terminal-Gly-aminoethanethioate + 2-iminoacetate + 1-deoxy-D-xylulose 5-phosphate = [ThiS sulfur-carrier protein]-C-terminal Gly-Gly + 2-[(2R,5Z)-2-carboxy-4-methylthiazol-5(2H)-ylidene]ethyl phosphate + 2 H2O + H(+). It functions in the pathway cofactor biosynthesis; thiamine diphosphate biosynthesis. In terms of biological role, catalyzes the rearrangement of 1-deoxy-D-xylulose 5-phosphate (DXP) to produce the thiazole phosphate moiety of thiamine. Sulfur is provided by the thiocarboxylate moiety of the carrier protein ThiS. In vitro, sulfur can be provided by H(2)S. This chain is Thiazole synthase 2, found in Syntrophotalea carbinolica (strain DSM 2380 / NBRC 103641 / GraBd1) (Pelobacter carbinolicus).